Reading from the N-terminus, the 240-residue chain is 7-cyano-7-deazaguanine synthase (240 aa).

An ATP-binding site is contributed by 18–28; the sequence is FSGGQDSTTCL. Zn(2+) is bound by residues C197, C206, C209, and C212.

Belongs to the QueC family. The cofactor is Zn(2+).

The catalysed reaction is 7-carboxy-7-deazaguanine + NH4(+) + ATP = 7-cyano-7-deazaguanine + ADP + phosphate + H2O + H(+). It functions in the pathway purine metabolism; 7-cyano-7-deazaguanine biosynthesis. In terms of biological role, catalyzes the ATP-dependent conversion of 7-carboxy-7-deazaguanine (CDG) to 7-cyano-7-deazaguanine (preQ(0)). This chain is 7-cyano-7-deazaguanine synthase, found in Shewanella putrefaciens (strain CN-32 / ATCC BAA-453).